The sequence spans 331 residues: Putative serine/threonine-protein kinase ZK507.1 (331 aa).

Residues 1-270 (MKVNEEGFAI…CKLTLKEPLV (270 aa)) enclose the Protein kinase domain. The Proton acceptor role is filled by D116. The segment covering 302–314 (SDRNEENSLDRSK) has biased composition (basic and acidic residues). The interval 302-331 (SDRNEENSLDRSKTGTLSFNNSKNKKPSRY) is disordered.

The protein belongs to the protein kinase superfamily. Ser/Thr protein kinase family.

The enzyme catalyses L-seryl-[protein] + ATP = O-phospho-L-seryl-[protein] + ADP + H(+). The catalysed reaction is L-threonyl-[protein] + ATP = O-phospho-L-threonyl-[protein] + ADP + H(+). This is Putative serine/threonine-protein kinase ZK507.1 from Caenorhabditis elegans.